Here is a 408-residue protein sequence, read N- to C-terminus: MQDPNKLRPFFENVEFNREGSNMILNFGPQHPSAHGQLKLVLEVDGEKIIKARPGIGYMHRGVEKMAENMIYQEFVPVTDRVDYIAAGSNNYGFCATVEKLCGIDVPRRAQIIRTMLLELNRIASHLLFLGTHALDIGAMTVFLYTFREREYVLDLIEKYSGARLTHHNVKIGGMFVDLPDGWLDELLAFCEKFPRDIADYEALLDTNRIWLLRTQNVGVITKEQALSCGCSGVMLRASGYKWDIRKEEPYLIYDELDFDVPYAEAGDCYARYKCYVQEMRESVKILTQCVPLYKASEPKILADSPEFVSAGKEQLMSQNYSLMQHFVLITQGLKPPEGEIYLATESPKGELGFYIYSVGESSPYRLKIRCPSFWHCAIYEEIMPGQYIADVTAIIGSSNIILGEVDR.

The protein belongs to the complex I 49 kDa subunit family. NDH-1 is composed of 14 different subunits. Subunits NuoB, C, D, E, F, and G constitute the peripheral sector of the complex.

The protein resides in the cell inner membrane. It catalyses the reaction a quinone + NADH + 5 H(+)(in) = a quinol + NAD(+) + 4 H(+)(out). In terms of biological role, NDH-1 shuttles electrons from NADH, via FMN and iron-sulfur (Fe-S) centers, to quinones in the respiratory chain. The immediate electron acceptor for the enzyme in this species is believed to be ubiquinone. Couples the redox reaction to proton translocation (for every two electrons transferred, four hydrogen ions are translocated across the cytoplasmic membrane), and thus conserves the redox energy in a proton gradient. The protein is NADH-quinone oxidoreductase subunit D of Campylobacter hominis (strain ATCC BAA-381 / DSM 21671 / CCUG 45161 / LMG 19568 / NCTC 13146 / CH001A).